A 113-amino-acid chain; its full sequence is UPF0122 protein MCAP_0480 (113 aa).

This sequence belongs to the UPF0122 family.

Functionally, might take part in the signal recognition particle (SRP) pathway. This is inferred from the conservation of its genetic proximity to ftsY/ffh. May be a regulatory protein. The chain is UPF0122 protein MCAP_0480 from Mycoplasma capricolum subsp. capricolum (strain California kid / ATCC 27343 / NCTC 10154).